The primary structure comprises 207 residues: 3-isopropylmalate dehydratase small subunit (207 aa).

This sequence belongs to the LeuD family. LeuD type 1 subfamily. Heterodimer of LeuC and LeuD.

It carries out the reaction (2R,3S)-3-isopropylmalate = (2S)-2-isopropylmalate. It functions in the pathway amino-acid biosynthesis; L-leucine biosynthesis; L-leucine from 3-methyl-2-oxobutanoate: step 2/4. Its function is as follows. Catalyzes the isomerization between 2-isopropylmalate and 3-isopropylmalate, via the formation of 2-isopropylmaleate. The sequence is that of 3-isopropylmalate dehydratase small subunit (leuD) from Buchnera aphidicola subsp. Acyrthosiphon pisum (strain APS) (Acyrthosiphon pisum symbiotic bacterium).